The following is a 156-amino-acid chain: 3-hydroxyacyl-[acyl-carrier-protein] dehydratase FabZ (156 aa).

Residue H57 is part of the active site.

This sequence belongs to the thioester dehydratase family. FabZ subfamily.

It localises to the cytoplasm. It carries out the reaction a (3R)-hydroxyacyl-[ACP] = a (2E)-enoyl-[ACP] + H2O. Involved in unsaturated fatty acids biosynthesis. Catalyzes the dehydration of short chain beta-hydroxyacyl-ACPs and long chain saturated and unsaturated beta-hydroxyacyl-ACPs. The sequence is that of 3-hydroxyacyl-[acyl-carrier-protein] dehydratase FabZ from Anaeromyxobacter dehalogenans (strain 2CP-1 / ATCC BAA-258).